Here is a 423-residue protein sequence, read N- to C-terminus: UDP-N-acetylglucosamine 1-carboxyvinyltransferase 2 (423 aa).

23-24 (KN) contributes to the phosphoenolpyruvate binding site. Arg-93 contributes to the UDP-N-acetyl-alpha-D-glucosamine binding site. The active-site Proton donor is the Cys-117. Cys-117 carries the post-translational modification 2-(S-cysteinyl)pyruvic acid O-phosphothioketal. Residues 122-126 (RPIDQ), Asp-305, and Ile-327 contribute to the UDP-N-acetyl-alpha-D-glucosamine site.

This sequence belongs to the EPSP synthase family. MurA subfamily.

Its subcellular location is the cytoplasm. The enzyme catalyses phosphoenolpyruvate + UDP-N-acetyl-alpha-D-glucosamine = UDP-N-acetyl-3-O-(1-carboxyvinyl)-alpha-D-glucosamine + phosphate. Its pathway is cell wall biogenesis; peptidoglycan biosynthesis. Functionally, cell wall formation. Adds enolpyruvyl to UDP-N-acetylglucosamine. The sequence is that of UDP-N-acetylglucosamine 1-carboxyvinyltransferase 2 from Listeria monocytogenes serovar 1/2a (strain ATCC BAA-679 / EGD-e).